Here is a 988-residue protein sequence, read N- to C-terminus: Echinoderm microtubule-associated protein-like 4 (988 aa).

The residue at position 1 (Met1) is an N-acetylmethionine. The segment at 1 to 260 (MDGFAGSLDD…IPSDVDNYDD (260 aa)) is microtubule-binding. Phosphoserine occurs at positions 7, 13, 16, 61, and 79. Residues 14–63 (AASTSDVQDRLSALESRVQQQEDEITVLKAALADVLRRLAISEDHVASVK) are a coiled coil. Thr96 carries the phosphothreonine modification. The disordered stretch occupies residues 106-194 (TLSSAAKSGT…WENSDDSRNK (89 aa)). A compositionally biased stretch (basic and acidic residues) spans 114-134 (GTEKKKEKPQGQREKKEDSHS). Residue Ser134 is modified to Phosphoserine; by NEK7. A compositionally biased stretch (low complexity) spans 137–155 (QSPQIRASPSPQPSSQPLQ). Ser144 is modified (phosphoserine; by NEK6). A Phosphoserine; by NEK7 modification is found at Ser146. The segment covering 156-168 (INRQTPESKSSAP) has biased composition (polar residues). Position 171 is a phosphoserine (Ser171). Residues 176–193 (PTAEKSHNSWENSDDSRN) are compositionally biased toward basic and acidic residues. Ser200 carries the post-translational modification Phosphoserine. At Thr201 the chain carries Phosphothreonine. Residue Tyr237 is modified to Phosphotyrosine. Thr248 is modified (phosphothreonine). WD repeat units lie at residues 270–308 (LKLE…LFNY), 312–359 (TQRH…VWDS), 367–407 (VIGL…VWDW), 414–449 (AEIK…FWTW), 456–495 (RKQG…IWSK), 511–549 (QINR…LWDH), 554–590 (EREI…LRGT), 593–632 (DGFQ…MWNS), 636–673 (RLEW…VLDA), 679–715 (VSIH…LYTV), 722–761 (YSRY…YWDI), 771–829 (RSDC…LFQY), and 836–875 (APSH…QWKL). Thr620 carries the phosphothreonine; by NEK6 and NEK7 modification. Residues 887–988 (ITDASVTKTP…EEERGITPLC (102 aa)) are disordered. Residues 890-904 (ASVTKTPASSSETAR) are compositionally biased toward polar residues. 3 positions are modified to phosphoserine: Ser906, Ser908, and Ser914. The segment covering 927-939 (MGSSPTLVENSLE) has biased composition (polar residues). Acidic residues predominate over residues 944-953 (PSEEQSEWGS).

This sequence belongs to the WD repeat EMAP family. Homotrimer; self-association is mediated by the N-terminal coiled coil. Interacts (via WD repeats) with NUDC. Interacts with alpha- and beta-tubulin during mitosis. Post-translationally, phosphorylated during mitosis. Phosphorylation at Ser-144 and Ser-146 promotes its dissociation from microtubules during mitosis which is required for efficient chromosome congression.

Its subcellular location is the cytoplasm. The protein localises to the cytoskeleton. The protein resides in the spindle. It is found in the microtubule organizing center. It localises to the midbody. Its function is as follows. Essential for the stability of microtubules (MTs). Essential for the formation of MTs. Required for the organization of the mitotic spindle and for the proper attachment of kinetochores to MTs. Promotes the recruitment of NUDC to the mitotic spindle for mitotic progression. This is Echinoderm microtubule-associated protein-like 4 (Eml4) from Mus musculus (Mouse).